The following is an 88-amino-acid chain: UPF0297 protein RBAM_024500 (88 aa).

This sequence belongs to the UPF0297 family.

This is UPF0297 protein RBAM_024500 from Bacillus velezensis (strain DSM 23117 / BGSC 10A6 / LMG 26770 / FZB42) (Bacillus amyloliquefaciens subsp. plantarum).